The primary structure comprises 475 residues: Threonine synthase (475 aa).

At Lys120 the chain carries N6-(pyridoxal phosphate)lysine.

It belongs to the threonine synthase family. Pyridoxal 5'-phosphate is required as a cofactor.

The catalysed reaction is O-phospho-L-homoserine + H2O = L-threonine + phosphate. Its pathway is amino-acid biosynthesis; L-threonine biosynthesis; L-threonine from L-aspartate: step 5/5. In terms of biological role, catalyzes the gamma-elimination of phosphate from L-phosphohomoserine and the beta-addition of water to produce L-threonine. This is Threonine synthase (thrC) from Methylobacillus glycogenes.